Reading from the N-terminus, the 130-residue chain is S-adenosylmethionine decarboxylase proenzyme (130 aa).

The active-site Schiff-base intermediate with substrate; via pyruvic acid is the Ser63. The residue at position 63 (Ser63) is a Pyruvic acid (Ser); by autocatalysis. Catalysis depends on His68, which acts as the Proton acceptor; for processing activity. Cys83 (proton donor; for catalytic activity) is an active-site residue.

It belongs to the prokaryotic AdoMetDC family. Type 1 subfamily. In terms of assembly, heterotetramer of two alpha and two beta chains arranged as a dimer of alpha/beta heterodimers. The cofactor is pyruvate. Is synthesized initially as an inactive proenzyme. Formation of the active enzyme involves a self-maturation process in which the active site pyruvoyl group is generated from an internal serine residue via an autocatalytic post-translational modification. Two non-identical subunits are generated from the proenzyme in this reaction, and the pyruvate is formed at the N-terminus of the alpha chain, which is derived from the carboxyl end of the proenzyme. The post-translation cleavage follows an unusual pathway, termed non-hydrolytic serinolysis, in which the side chain hydroxyl group of the serine supplies its oxygen atom to form the C-terminus of the beta chain, while the remainder of the serine residue undergoes an oxidative deamination to produce ammonia and the pyruvoyl group blocking the N-terminus of the alpha chain.

The catalysed reaction is S-adenosyl-L-methionine + H(+) = S-adenosyl 3-(methylsulfanyl)propylamine + CO2. Its pathway is amine and polyamine biosynthesis; S-adenosylmethioninamine biosynthesis; S-adenosylmethioninamine from S-adenosyl-L-methionine: step 1/1. In terms of biological role, catalyzes the decarboxylation of S-adenosylmethionine to S-adenosylmethioninamine (dcAdoMet), the propylamine donor required for the synthesis of the polyamines spermine and spermidine from the diamine putrescine. The sequence is that of S-adenosylmethionine decarboxylase proenzyme from Thermosipho melanesiensis (strain DSM 12029 / CIP 104789 / BI429).